The chain runs to 103 residues: uncharacterized protein (103 aa).

This is an uncharacterized protein from Sinorhizobium fredii (strain NBRC 101917 / NGR234).